The chain runs to 413 residues: Clamp protein VP6 (413 aa).

This sequence belongs to the reoviridae clamp protein family. Interacts with capsid proteins VP3, VP4 and VP7.

The protein resides in the virion. Located at the interface of the incomplete T=13 outer capsid and the pseudo T=2 inner capsid, 120 VP6 subunits clamp and stabilize the inner capsid shell. This chain is Clamp protein VP6 (S8), found in Ctenopharyngodon idella (Grass carp).